A 132-amino-acid polypeptide reads, in one-letter code: Large ribosomal subunit protein uL22 (132 aa).

Belongs to the universal ribosomal protein uL22 family. As to quaternary structure, part of the 50S ribosomal subunit.

Functionally, this protein binds specifically to 23S rRNA; its binding is stimulated by other ribosomal proteins, e.g. L4, L17, and L20. It is important during the early stages of 50S assembly. It makes multiple contacts with different domains of the 23S rRNA in the assembled 50S subunit and ribosome. The globular domain of the protein is located near the polypeptide exit tunnel on the outside of the subunit, while an extended beta-hairpin is found that lines the wall of the exit tunnel in the center of the 70S ribosome. The protein is Large ribosomal subunit protein uL22 of Pelagibacter ubique (strain HTCC1062).